The chain runs to 335 residues: Nucleoid-associated protein YejK (335 aa).

It belongs to the YejK family.

It is found in the cytoplasm. Its subcellular location is the nucleoid. This is Nucleoid-associated protein YejK from Salmonella enteritidis PT4 (strain P125109).